A 341-amino-acid polypeptide reads, in one-letter code: DNA-directed RNA polymerase subunit alpha (341 aa).

The interval 1-237 (MLSLSKNWNA…EQLQLFISFE (237 aa)) is alpha N-terminal domain (alpha-NTD). The segment at 252 to 341 (FSPYLLKRVD…LSKRYEDSYN (90 aa)) is alpha C-terminal domain (alpha-CTD).

Belongs to the RNA polymerase alpha chain family. In terms of assembly, homodimer. The RNAP catalytic core consists of 2 alpha, 1 beta, 1 beta' and 1 omega subunit. When a sigma factor is associated with the core the holoenzyme is formed, which can initiate transcription.

It catalyses the reaction RNA(n) + a ribonucleoside 5'-triphosphate = RNA(n+1) + diphosphate. Its function is as follows. DNA-dependent RNA polymerase catalyzes the transcription of DNA into RNA using the four ribonucleoside triphosphates as substrates. The sequence is that of DNA-directed RNA polymerase subunit alpha from Rickettsia bellii (strain OSU 85-389).